The chain runs to 392 residues: Probable tRNA sulfurtransferase (392 aa).

In terms of domain architecture, THUMP spans 59–166 (SCYREALKRV…DEGLFIYTTE (108 aa)). Residues 186–187 (LL), 211–212 (YF), arginine 269, glycine 290, and glutamine 299 contribute to the ATP site.

The protein belongs to the ThiI family.

The protein resides in the cytoplasm. The enzyme catalyses [ThiI sulfur-carrier protein]-S-sulfanyl-L-cysteine + a uridine in tRNA + 2 reduced [2Fe-2S]-[ferredoxin] + ATP + H(+) = [ThiI sulfur-carrier protein]-L-cysteine + a 4-thiouridine in tRNA + 2 oxidized [2Fe-2S]-[ferredoxin] + AMP + diphosphate. The catalysed reaction is [ThiS sulfur-carrier protein]-C-terminal Gly-Gly-AMP + S-sulfanyl-L-cysteinyl-[cysteine desulfurase] + AH2 = [ThiS sulfur-carrier protein]-C-terminal-Gly-aminoethanethioate + L-cysteinyl-[cysteine desulfurase] + A + AMP + 2 H(+). It participates in cofactor biosynthesis; thiamine diphosphate biosynthesis. Catalyzes the ATP-dependent transfer of a sulfur to tRNA to produce 4-thiouridine in position 8 of tRNAs, which functions as a near-UV photosensor. Also catalyzes the transfer of sulfur to the sulfur carrier protein ThiS, forming ThiS-thiocarboxylate. This is a step in the synthesis of thiazole, in the thiamine biosynthesis pathway. The sulfur is donated as persulfide by IscS. The polypeptide is Probable tRNA sulfurtransferase (Coxiella burnetii (strain RSA 493 / Nine Mile phase I)).